The sequence spans 1028 residues: Unconventional myosin-Ic (1028 aa).

Met1 is subject to N-acetylmethionine. One can recognise a Myosin motor domain in the interval 12-696 (GVQDFVLLEN…TLFATEDALE (685 aa)). ATP is bound by residues Asn53, Tyr61, 104–113 (SGESGAGKTE), and 157–161 (NDNSS). Lys348 is subject to N6-methyllysine. Residues 573–595 (LSKLMEILMSKQPSYVRCIKPND) form an actin-binding region. IQ domains lie at 699 to 728 (KHSI…SAVE) and 722 to 751 (MKHS…AVDV). A TH1 domain is found at 850–1024 (KDNYPQSVPR…NGHLSVVAPR (175 aa)).

It belongs to the TRAFAC class myosin-kinesin ATPase superfamily. Myosin family. Interacts (via its IQ motifs) with calmodulin. In terms of tissue distribution, expressed in brain and the sacculus of the internal ear.

It localises to the cytoplasm. Its subcellular location is the cell membrane. The protein resides in the cell projection. It is found in the ruffle membrane. The protein localises to the cytoplasmic vesicle. It localises to the stereocilium membrane. Functionally, myosins are actin-based motor molecules with ATPase activity. Unconventional myosins serve in intracellular movements. Their highly divergent tails are presumed to bind to membranous compartments, which would be moved relative to actin filaments. The sequence is that of Unconventional myosin-Ic (Myo1c) from Aquarana catesbeiana (American bullfrog).